An 839-amino-acid chain; its full sequence is RNA-directed RNA polymerase 2a (839 aa).

Residues 508 to 621 (KHCLEIDLSK…FSKLPPVGDP (114 aa)) enclose the RdRp catalytic domain. Positions 773 to 824 (NGCVDSSGVDRRPPLSQFAGGETSKTKVSRQKPASEGLQKSQRESAIYSETF) are disordered.

The protein belongs to the ssRNA positive-strand viruses RNA-directed RNA polymerase family. Interacts with replication protein 1a.

The catalysed reaction is RNA(n) + a ribonucleoside 5'-triphosphate = RNA(n+1) + diphosphate. Its function is as follows. RNA-dependent RNA polymerase which replicates the viral genome composed of 3 RNA segments, RNA1, RNA2 and RNA3. The protein is RNA-directed RNA polymerase 2a of Cucumber mosaic virus (strain Q) (CMV).